We begin with the raw amino-acid sequence, 1070 residues long: uncharacterized protein (1070 aa).

The UBA domain maps to 477 to 523 (LIDTNQLLLRQLQQIVKLGIFNEKKIKEELKANKFNEQVALQILESE).

This is an uncharacterized protein from Sulfolobus islandicus rod-shaped virus 1 (SIRV-1).